The following is a 316-amino-acid chain: Aspartate carbamoyltransferase catalytic subunit (316 aa).

Carbamoyl phosphate contacts are provided by arginine 60 and threonine 61. Residue lysine 88 participates in L-aspartate binding. 3 residues coordinate carbamoyl phosphate: arginine 110, histidine 138, and glutamine 141. L-aspartate contacts are provided by arginine 171 and arginine 225. Residues glycine 266 and proline 267 each contribute to the carbamoyl phosphate site.

The protein belongs to the aspartate/ornithine carbamoyltransferase superfamily. ATCase family. In terms of assembly, heterododecamer (2C3:3R2) of six catalytic PyrB chains organized as two trimers (C3), and six regulatory PyrI chains organized as three dimers (R2).

The catalysed reaction is carbamoyl phosphate + L-aspartate = N-carbamoyl-L-aspartate + phosphate + H(+). Its pathway is pyrimidine metabolism; UMP biosynthesis via de novo pathway; (S)-dihydroorotate from bicarbonate: step 2/3. Catalyzes the condensation of carbamoyl phosphate and aspartate to form carbamoyl aspartate and inorganic phosphate, the committed step in the de novo pyrimidine nucleotide biosynthesis pathway. This chain is Aspartate carbamoyltransferase catalytic subunit, found in Rhizorhabdus wittichii (strain DSM 6014 / CCUG 31198 / JCM 15750 / NBRC 105917 / EY 4224 / RW1) (Sphingomonas wittichii).